A 987-amino-acid chain; its full sequence is Leucine--tRNA ligase (987 aa).

The 'HIGH' region signature appears at 69–80; it reads PYPSGKGLHVGH. The 'KMSKS' region signature appears at 760-764; that stretch reads KMGKS. Lys-763 contacts ATP.

It belongs to the class-I aminoacyl-tRNA synthetase family.

It localises to the cytoplasm. It catalyses the reaction tRNA(Leu) + L-leucine + ATP = L-leucyl-tRNA(Leu) + AMP + diphosphate. In Bifidobacterium longum (strain NCC 2705), this protein is Leucine--tRNA ligase.